A 120-amino-acid polypeptide reads, in one-letter code: Ribosome-binding factor A (120 aa).

It belongs to the RbfA family. Monomer. Binds 30S ribosomal subunits, but not 50S ribosomal subunits or 70S ribosomes.

It is found in the cytoplasm. Functionally, one of several proteins that assist in the late maturation steps of the functional core of the 30S ribosomal subunit. Associates with free 30S ribosomal subunits (but not with 30S subunits that are part of 70S ribosomes or polysomes). Required for efficient processing of 16S rRNA. May interact with the 5'-terminal helix region of 16S rRNA. In Borreliella burgdorferi (strain ATCC 35210 / DSM 4680 / CIP 102532 / B31) (Borrelia burgdorferi), this protein is Ribosome-binding factor A.